Reading from the N-terminus, the 330-residue chain is Mucin-15 (330 aa).

Residues 1–23 (MLTSAKILLISILSSLLLFGSHG) form the signal peptide. The interval 23–115 (GEEGQKTNTT…SPRSPSTHSF (93 aa)) is disordered. At 24–232 (EEGQKTNTTE…SDPQEENRNT (209 aa)) the chain is on the extracellular side. Asn-30, Asn-44, Asn-54, Asn-71, Asn-79, Asn-89, Asn-94, Asn-122, Asn-138, Asn-147, Asn-154, Asn-162, Asn-175, Asn-214, and Asn-221 each carry an N-linked (GlcNAc...) asparagine glycan. Polar residues predominate over residues 42–56 (MENQSVPLESKANLT). Residues 86–115 (FYSNLSTDNSSRSPSLMPTLSPRSPSTHSF) are compositionally biased toward polar residues. Residues 164-185 (SITVSNLPSGPNTTSVTPMVTE) form a disordered region. Residues 233-253 (GVVFGAILGAILGASLLSLVG) traverse the membrane as a helical segment. The Cytoplasmic segment spans residues 254-330 (YLLCGKRKTD…DDIPPLRTSV (77 aa)). The interval 279–330 (LRLDNAPEPYDMSFGNSSYYNPTANDSSTSAGGENAHDSIPMDDIPPLRTSV) is disordered. The span at 292–310 (FGNSSYYNPTANDSSTSAG) shows a compositional bias: polar residues.

In terms of processing, highly glycosylated (N- and O-linked carbohydrates). In terms of tissue distribution, mainly expressed on apical surfaces of the mammary epithelial cells.

The protein localises to the cell membrane. Its subcellular location is the secreted. The polypeptide is Mucin-15 (MUC15) (Bos taurus (Bovine)).